Consider the following 7081-residue polypeptide: Leucine-rich repeat transmembrane protein CCDC168 (7081 aa).

A helical membrane pass occupies residues 37 to 57 (WVAIFFIILLGIIFEIILMKA). 2 LRR repeats span residues 233-256 (PCPLAHLFLSRDQVRLLEENVRNQ) and 420-445 (NAEFLVLTLNPNLVTEDMPQLRSVKA). The interval 717 to 745 (EDLQSSENSHLQLSNGEELPTSTPKTQRC) is disordered. Over residues 718–742 (DLQSSENSHLQLSNGEELPTSTPKT) the composition is skewed to polar residues. The stretch at 865–890 (ADTLRIIRLSHSASKQEKLPDEKETQ) is one LRR 3 repeat. The interval 943–1009 (QISSGSSKAP…DPKNPLTMPE (67 aa)) is disordered. Residues 958–970 (VQPQTLSTQTILE) are compositionally biased toward polar residues. Basic and acidic residues predominate over residues 981-999 (QVEKVKQSTDRPTDRESAG). An LRR 4 repeat occupies 1050-1075 (LPAVALGSFNNHLLTLPYFKRQEIKK). 2 stretches are compositionally biased toward polar residues: residues 1274–1286 (KCTADSETPSPIS) and 1295–1304 (LNQTRESYIP). Residues 1274–1304 (KCTADSETPSPISGKSLIGDPLNQTRESYIP) form a disordered region. Residues 1501-1527 (NCLTLELHINGQRLQHQTGFEQTTLET) form an LRR 5 repeat. 2 stretches are compositionally biased toward basic and acidic residues: residues 1773-1784 (ETEKDTLREKRL) and 1793-1804 (TSPHEDSITSRD). Disordered regions lie at residues 1773-1804 (ETEKDTLREKRLSSTQVKQDTSPHEDSITSRD), 1954-1973 (KSPHGGEAQKANLTDMESGS), 2008-2031 (STHQMKDPDPCKSGSEPKSPEGRS), and 2083-2103 (TGKSKIGSIPRDTPWDENPRR). The segment covering 1964 to 1973 (ANLTDMESGS) has biased composition (polar residues). The LRR 6 repeat unit spans residues 2373–2397 (KNQINTIQLSERKIILNPKCLTMKE). Positions 2637–2680 (GRHSPASEEMKRQNGRLKMADRSSPQGRPLQAKQSAVSQSPDTA) are disordered. The span at 2668-2678 (AKQSAVSQSPD) shows a compositional bias: polar residues. 5 LRR repeats span residues 2727-2749 (SKIHPLQIENKKEFKTADWKTRA), 2832-2855 (IQQQKSFQLSKNAVHRVLKAVYDS), 2862-2889 (IKKLTEVKMEKDKPKDRTCILPQPKLEK), 3433-3458 (LSSRTPGLDLFSADQLSTITKNRLEW), and 3630-3653 (ILSLPHFKLNKETIDGVISSNVKS). Positions 3730-3756 (SLSHSNSNSRTKAGKDKSGTLKGCLPP) are disordered. An LRR 12 repeat occupies 3875–3898 (MRGITRFCLSSSTQQELSDTMEKC). Disordered regions lie at residues 4119-4260 (ELSH…DGDK), 4293-4428 (QGII…KQET), 4729-4756 (QESLPSRQTAPTKPTESLVKKEKQLLPQ), 4794-4817 (SPLSKRKEPQWGMKERAGQKQDRT), 4831-4859 (MPSLSHHRFSPSQPKLPISSGAGKSRLAN), 4928-4955 (GVQESKKEPGVVPRKSASFPPPPFYLNC), 4966-4985 (LGKTQFSFPPLKIQDSSDSG), and 5191-5212 (QKVKSGPGVMLSKSPSRSSPLH). Basic and acidic residues-rich tracts occupy residues 4121–4133 (SHQKSSEAGEKAD), 4147–4176 (KAKDYMQQKEDDEVKISAKKDIMHPEDKGL), 4192–4245 (EPGK…EQQK), 4329–4361 (QKAKDYMQQKEEDEVKISAEKDLMHPEDKDLKG), 4375–4401 (EPGKRDGEGQEQGKEDGEGEEQGNRDG), and 4415–4426 (EQEKRDGHKSKQ). The segment covering 4731-4743 (SLPSRQTAPTKPT) has biased composition (polar residues). Basic and acidic residues-rich tracts occupy residues 4746 to 4756 (LVKKEKQLLPQ) and 4798 to 4817 (KRKEPQWGMKERAGQKQDRT). A compositionally biased stretch (polar residues) spans 5203-5212 (KSPSRSSPLH). An LRR 13 repeat occupies 5311–5336 (LSQLELDKETHLGNEMLRLKRPILRR). Residues 5467–5496 (LPDTEKTADAEARSGDVRKGKPHRSQKENR) are disordered. Over residues 5469–5496 (DTEKTADAEARSGDVRKGKPHRSQKENR) the composition is skewed to basic and acidic residues. Residues 5522-5545 (LNAKELVLNINKLEKKVHKDKDEA) form an LRR 14 repeat. Disordered stretches follow at residues 5564 to 5583 (LDSGNKTDKDTPGITGSSCP) and 5763 to 5792 (QQETSSKVSPELAGSCKFDKPKEDGQSNDR). The segment covering 5779-5792 (KFDKPKEDGQSNDR) has biased composition (basic and acidic residues). 5 LRR repeats span residues 5901–5924 (KQALLISEQEEGVLEFLPKSLFPP), 6259–6282 (PDLRIIEQEEKILKRILTPTECPS), 6419–6442 (HLESKALEIQLNLIPEMARKSLQM), 6552–6575 (HFSVKTLEIQMKAFPRIVRESYAM), and 6613–6637 (QIDLDLQYKYLRFLLGLPVGSTFPK). Disordered regions lie at residues 6859–6878 (CKSHKSRKYRSSSKMKSPDW) and 6916–6950 (APLTESNIKSHLAKNQGKSHRHPESQERKKARSDL). Residues 6860–6871 (KSHKSRKYRSSS) show a composition bias toward basic residues. The segment covering 6937–6950 (HPESQERKKARSDL) has biased composition (basic and acidic residues). The stretch at 7012–7036 (NRPFFFACVPADSLEVIPKTIRWTI) is one LRR 20 repeat.

Its subcellular location is the membrane. This chain is Leucine-rich repeat transmembrane protein CCDC168, found in Homo sapiens (Human).